Here is a 332-residue protein sequence, read N- to C-terminus: Apoptosis-enhancing nuclease (332 aa).

Positions 1–102 are disordered; that stretch reads MVPREVPESS…VPREAPSSGP (102 aa). Residues 20-36 are compositionally biased toward basic residues; it reads ARRRHKRRSRQHQRFMA. Residues 21 to 29 carry the Nucleolar localization signal motif; that stretch reads RRRHKRRSR. Polar residues predominate over residues 63–73; sequence QTPAGTEASGN. Residues 105-261 form the Exonuclease domain; the sequence is YVAIDCEMVG…EDAMTAMELY (157 aa). Residues 160–183 carry the Nuclear localization signal motif; the sequence is RQHMHKAIPFQVAQKEILKLLKGK. Positions 272–332 are disordered; sequence VASTAKAHPE…EGQGARSAPP (61 aa). The span at 310 to 321 shows a compositional bias: basic and acidic residues; sequence GDTREAQDRQEG.

The protein localises to the nucleus. Its subcellular location is the nucleolus. Exonuclease with activity against single- and double-stranded DNA and RNA. Mediates p53-induced apoptosis. When induced by p53 following DNA damage, digests double-stranded DNA to form single-stranded DNA and amplifies DNA damage signals, leading to enhancement of apoptosis. This is Apoptosis-enhancing nuclease from Rattus norvegicus (Rat).